The chain runs to 99 residues: MALTLTDVKRIAHLARLEMADADAEHMLGQLNEFFGLVEQMQAVDTAGIAPLAHPIEQIQEVAQRLRDDAVTEVVDRDDNQRPAPAVQDGLYLVPKVIE.

The protein belongs to the GatC family. In terms of assembly, heterotrimer of A, B and C subunits.

The catalysed reaction is L-glutamyl-tRNA(Gln) + L-glutamine + ATP + H2O = L-glutaminyl-tRNA(Gln) + L-glutamate + ADP + phosphate + H(+). The enzyme catalyses L-aspartyl-tRNA(Asn) + L-glutamine + ATP + H2O = L-asparaginyl-tRNA(Asn) + L-glutamate + ADP + phosphate + 2 H(+). Its function is as follows. Allows the formation of correctly charged Asn-tRNA(Asn) or Gln-tRNA(Gln) through the transamidation of misacylated Asp-tRNA(Asn) or Glu-tRNA(Gln) in organisms which lack either or both of asparaginyl-tRNA or glutaminyl-tRNA synthetases. The reaction takes place in the presence of glutamine and ATP through an activated phospho-Asp-tRNA(Asn) or phospho-Glu-tRNA(Gln). The sequence is that of Aspartyl/glutamyl-tRNA(Asn/Gln) amidotransferase subunit C from Burkholderia cenocepacia (strain ATCC BAA-245 / DSM 16553 / LMG 16656 / NCTC 13227 / J2315 / CF5610) (Burkholderia cepacia (strain J2315)).